Reading from the N-terminus, the 1392-residue chain is Condensin complex subunit 1 (1392 aa).

The interaction with SMC2 and SMC4 stretch occupies residues 1–593; sequence MSPHNFEFHL…TGSKDSPSVP (593 aa). Phosphoserine is present on residues Ser20 and Ser575. 3 disordered regions span residues 569 to 602, 945 to 966, and 1293 to 1392; these read EASTQDSHGDTDPGLTGSKDSPSVPEPEGSQSND, REEQEHRAKEPKEKTASSETTM, and FETG…RHRS. Residues 945–960 show a composition bias toward basic and acidic residues; the sequence is REEQEHRAKEPKEKTA. Residues Ser1300, Ser1305, Ser1320, and Ser1323 each carry the phosphoserine modification. Thr1329 bears the Phosphothreonine mark. The Bipartite nuclear localization signal signature appears at 1332 to 1353; that stretch reads PRRTKPGRPQTQQRKKSQRKAK. The span at 1344-1353 shows a compositional bias: basic residues; the sequence is QRKKSQRKAK. Phosphoserine occurs at positions 1358, 1361, 1362, and 1367. Acidic residues predominate over residues 1360 to 1373; it reads ESSEDELSAEMTEE. Phosphothreonine; by CDK1 is present on residues Thr1375 and Thr1380. A Phosphoserine modification is found at Ser1386.

The protein belongs to the CND1 (condensin subunit 1) family. As to quaternary structure, component of the condensin complex, which contains the SMC2 and SMC4 heterodimer, and three non SMC subunits that probably regulate the complex: NCAPH/BRRN1, NCAPD2/CAPD2 and NCAPG. Interacts with histones H1 and H3. In terms of processing, phosphorylated by CDK1. Its phosphorylation, as well as that of NCAPH and NCAPG subunits, activates the condensin complex and is required for chromosome condensation.

The protein resides in the nucleus. The protein localises to the cytoplasm. It is found in the chromosome. Its function is as follows. Regulatory subunit of the condensin complex, a complex required for conversion of interphase chromatin into mitotic-like condense chromosomes. The condensin complex probably introduces positive supercoils into relaxed DNA in the presence of type I topoisomerases and converts nicked DNA into positive knotted forms in the presence of type II topoisomerases. May target the condensin complex to DNA via its C-terminal domain. May promote the resolution of double-strand DNA catenanes (intertwines) between sister chromatids. Condensin-mediated compaction likely increases tension in catenated sister chromatids, providing directionality for type II topoisomerase-mediated strand exchanges toward chromatid decatenation. Required for decatenation of non-centromeric ultrafine DNA bridges during anaphase. Early in neurogenesis, may play an essential role to ensure accurate mitotic chromosome condensation in neuron stem cells, ultimately affecting neuron pool and cortex size. The polypeptide is Condensin complex subunit 1 (Ncapd2) (Mus musculus (Mouse)).